Consider the following 187-residue polypeptide: Guanylate kinase (187 aa).

The region spanning 5 to 183 (GRLTVLTGPS…ALKQLETHMQ (179 aa)) is the Guanylate kinase-like domain. An ATP-binding site is contributed by 12–19 (GPSGVGKG).

This sequence belongs to the guanylate kinase family.

It localises to the cytoplasm. It catalyses the reaction GMP + ATP = GDP + ADP. It carries out the reaction dZMP + ATP = dZDP + ADP. The protein operates within purine metabolism. Essential for recycling GMP and indirectly, cGMP. Functionally, (Microbial infection) Catalyzes the phosphorylation of dZMP to dZDP, when the bacterium is infected by a phage that produces the substrate for the synthesis of dZTP (2- amino-2'-deoxyadenosine 5'-triphosphate), which is then used by the phage as a DNA polymerase substrate. This chain is Guanylate kinase, found in Synechococcus sp. (strain CC9902).